We begin with the raw amino-acid sequence, 80 residues long: Serine protease inhibitor Kazal-type 6 (80 aa).

The N-terminal stretch at 1–23 (MKLSGMFLLLSLALFCFLTGVFS) is a signal peptide. The residue at position 24 (Q24) is a Pyrrolidone carboxylic acid. The Kazal-like domain occupies 24–80 (QGGQVDCGEFQDPKVYCTRESNPHCGSDGQTYGNKCAFCKAIVKSGGKISLKHPGKC). Intrachain disulfides connect C30–C62, C40–C59, and C48–C80.

It is found in the secreted. Functionally, serine protease inhibitor selective for kallikreins. Efficiently inhibits KLK4, KLK5, KLK6, KLK7, KLK12, KLK13 and KLK14. Doesn't inhibit KLK8. The sequence is that of Serine protease inhibitor Kazal-type 6 (SPINK6) from Homo sapiens (Human).